Consider the following 386-residue polypeptide: uncharacterized protein (386 aa).

11 consecutive transmembrane segments (helical) span residues 3–23 (WFSLFILSIAIGGSFALLVAI), 42–62 (LVGHVDSALIVGLYAFLIFLW), 72–92 (FASFLPALLGFFMIAGSSLFG), 102–122 (VPTIIHPVFFGGVSLFFLGVF), 145–165 (ILSTTVINSFLMPLTYLIAYF), 183–203 (FGGHTHQFVNAGLLISLWLLL), 212–232 (WFLNLLLVVFPITYFFAQIFL), 244–264 (TWGYMVGIGIPTIVYGLITLV), 276–296 (ILVLSVSLYLLGALMGYMIVG), 308–328 (VIASILVGVIALTFMYLQELG), and 333–353 (LGKFEKFIPFSTVLVCFFLSS).

To R.prowazekii RP382.

It is found in the cell membrane. This is an uncharacterized protein from Aquifex aeolicus (strain VF5).